Consider the following 2148-residue polypeptide: Polyketide synthase 1 (2148 aa).

The tract at residues 19–261 (FIFGDQSSCN…TPLAVHAPYH (243 aa)) is N-terminal acylcarrier protein transacylase domain (SAT). Residues 394-829 (ESKIAIIGMS…GGNTALLVED (436 aa)) enclose the Ketosynthase family 3 (KS3) domain. Residues Cys566, His701, and His745 each act as for beta-ketoacyl synthase activity in the active site. The segment at 929 to 1233 (AFVFSGQGSQ…PSLMRNKDGW (305 aa)) is malonyl-CoA:ACP transacylase (MAT) domain. The active-site For acyl/malonyl transferase activity is Ser1018. A product template (PT) domain region spans residues 1310–1624 (TASVHRIVHE…RKVLNTAMPP (315 aa)). Residues 1314-1447 (HRIVHESVEK…SSLHFEQPKV (134 aa)) form an N-terminal hotdog fold region. Positions 1314–1619 (HRIVHESVEK…FQGIPRKVLN (306 aa)) constitute a PKS/mFAS DH domain. Catalysis depends on His1346, which acts as the Proton acceptor; for dehydratase activity. Residues 1474–1619 (LNSRMSSGVI…FQGIPRKVLN (146 aa)) form a C-terminal hotdog fold region. Asp1533 serves as the catalytic Proton donor; for dehydratase activity. Residues 1619–1655 (NTAMPPPKSQNEAPVRSGPAKPAAKPPRSASSEHSGH) are disordered. Residues 1634-1650 (RSGPAKPAAKPPRSASS) show a composition bias toward low complexity. The Carrier 1 domain maps to 1678 to 1752 (RNPMLPVFKI…DLAAHLGLDT (75 aa)). Ser1712 carries the O-(pantetheine 4'-phosphoryl)serine modification. 2 stretches are compositionally biased toward low complexity: residues 1757-1769 (QSSGQSSSFGGLS) and 1779-1796 (TSSVTTPPSLSPRSSVSG). Residues 1757–1796 (QSSGQSSSFGGLSPRSDSIGEITSSVTTPPSLSPRSSVSG) form a disordered region. The Carrier 2 domain maps to 1793–1870 (SVSGSQCKDV…SFKHMFQQGH (78 aa)). O-(pantetheine 4'-phosphoryl)serine is present on Ser1830. A thioesterase (TE) domain region spans residues 1882 to 2146 (LKQYRATSTL…ERVAAFIRST (265 aa)). The active-site For thioesterase activity is the Ser1973.

Its function is as follows. Polyketide synthase; part of the Pks1 gene cluster that mediates the biosynthesis of an anthraquinone derivative pigment that contributes to conidial pigmentation that provides protection from UV radiation, heat and cold stress. The polyketide synthase Pks1 produces 1-acetyl-2,4,6,8-tetrahydroxy-9,10-anthraquinone though condensation of acetyl-CoA with malonyl-CoA. The dehydratase EthD and the laccase Mlac1 further convert the anthraquinone derivative into the final conidial pigment. This Metarhizium anisopliae (strain ARSEF 549) protein is Polyketide synthase 1.